The following is a 201-amino-acid chain: Probable calcium-binding protein CML15 (201 aa).

The disordered stretch occupies residues 1–55 (MGKVRAFFSRKGRGNSSGRSRSMREAAMNVDWSPRPSDLAAAAAAKPRPPAAEDE). EF-hand domains follow at residues 51–86 (AAED…VGHA), 87–122 (VTDD…PPGD), 125–160 (AAEE…IGEA), and 161–196 (ATVA…GAGF). Residues aspartate 64, asparagine 66, aspartate 68, arginine 70, glutamate 75, aspartate 100, aspartate 102, aspartate 104, tyrosine 106, glutamate 111, aspartate 138, aspartate 140, asparagine 142, glutamate 149, aspartate 174, asparagine 176, aspartate 178, and glutamate 185 each contribute to the Ca(2+) site.

Potential calcium sensor. This is Probable calcium-binding protein CML15 (CML15) from Oryza sativa subsp. japonica (Rice).